A 454-amino-acid polypeptide reads, in one-letter code: Aquaporin-7 (454 aa).

Over 1-71 (MNINEPRDGG…LHLHNKTRNH (71 aa)) the chain is Cytoplasmic. A helical transmembrane segment spans residues 72 to 92 (FVATVAEFAGTTLFLFFAFSG). Topologically, residues 93 to 115 (TQVALLATPANDSNVVGTPSNPA) are extracellular. Asn103 is a glycosylation site (N-linked (GlcNAc...) asparagine). The helical transmembrane segment at 116–136 (QLLYVSLCFGFSLAVNAWVFF) threads the bilayer. The Cytoplasmic segment spans residues 137–163 (RISGGLFNPAVTMGMCIVGALPYFRGL). The NPA 1 signature appears at 144-146 (NPA). The chain crosses the membrane as a helical span at residues 164–184 (LLIFAQIIGGIAAAAIVSALF). Topologically, residues 185 to 202 (PGPITFRTSLGGGTSIVQ) are extracellular. Residues 203-223 (GLFIEMFLTAELVFTIFMLAA) traverse the membrane as a helical segment. At 224-229 (EKHKGT) the chain is on the cytoplasmic side. A helical membrane pass occupies residues 230–250 (FIAPIGIGLSLFIAELTGVYF). Over 251-274 (TGGSVNPARSFGPSVVSGQFTGYH) the chain is Extracellular. An NPA 2 motif is present at residues 256–258 (NPA). The helical transmembrane segment at 275 to 295 (WIYWVGPILGAILASAFYKFI) threads the bilayer. Residues 296 to 454 (KMLEYETANP…ENLRDNTHNN (159 aa)) are Cytoplasmic-facing. A disordered region spans residues 343–454 (GASHVHENGN…ENLRDNTHNN (112 aa)).

It belongs to the MIP/aquaporin (TC 1.A.8) family.

The protein resides in the membrane. The catalysed reaction is H2O(in) = H2O(out). In terms of biological role, water channel required to facilitate the transport of water across membranes. Involved in conidiation. This chain is Aquaporin-7, found in Botryotinia fuckeliana (strain B05.10) (Noble rot fungus).